The primary structure comprises 336 residues: D-alanine--D-alanine ligase (336 aa).

The ATP-grasp domain maps to 124–330 (KMWFSALGIP…FTEYLSLVIN (207 aa)). An ATP-binding site is contributed by 154–209 (ALENWGSIFVKAASQGSSVGCYKVDDSSKVADVLKDAFGYAPYVIVEKTIKARELE). Residues aspartate 284, glutamate 297, and asparagine 299 each contribute to the Mg(2+) site.

It belongs to the D-alanine--D-alanine ligase family. The cofactor is Mg(2+). Requires Mn(2+) as cofactor.

The protein resides in the cytoplasm. The enzyme catalyses 2 D-alanine + ATP = D-alanyl-D-alanine + ADP + phosphate + H(+). The protein operates within cell wall biogenesis; peptidoglycan biosynthesis. Cell wall formation. This is D-alanine--D-alanine ligase from Shewanella sp. (strain ANA-3).